We begin with the raw amino-acid sequence, 345 residues long: Protein RecA (345 aa).

An ATP-binding site is contributed by 65–72 (GPESSGKT).

It belongs to the RecA family.

Its subcellular location is the cytoplasm. In terms of biological role, can catalyze the hydrolysis of ATP in the presence of single-stranded DNA, the ATP-dependent uptake of single-stranded DNA by duplex DNA, and the ATP-dependent hybridization of homologous single-stranded DNAs. It interacts with LexA causing its activation and leading to its autocatalytic cleavage. In Stenotrophomonas maltophilia (strain R551-3), this protein is Protein RecA.